The primary structure comprises 287 residues: Anthocyanidin 3-O-glucosyltransferase 7 (287 aa).

Positions 162, 164, 179, 182, 183, 184, and 187 each coordinate UDP-alpha-D-glucose. An an anthocyanidin-binding site is contributed by Gly-202. Residues Asp-203 and Gln-204 each contribute to the UDP-alpha-D-glucose site.

Belongs to the UDP-glycosyltransferase family. In terms of tissue distribution, expressed in cotyledons, hypocotyls, roots and leaves.

It catalyses the reaction an anthocyanidin + UDP-alpha-D-glucose + H(+) = an anthocyanidin 3-O-beta-D-glucoside + UDP. It functions in the pathway pigment biosynthesis; anthocyanin biosynthesis. In the presence of other necessary color factors, this glycosylation reaction allows the accumulation of anthocyanin pigments. The polypeptide is Anthocyanidin 3-O-glucosyltransferase 7 (GT7) (Manihot esculenta (Cassava)).